A 174-amino-acid polypeptide reads, in one-letter code: ATP synthase subunit d, mitochondrial (174 aa).

Position 2 is an N-acetylserine (serine 2).

It belongs to the ATPase d subunit family. In terms of assembly, F-type ATPases have 2 components, CF(1) - the catalytic core - and CF(0) - the membrane proton channel. In yeast, the dimeric form of ATP synthase consists of 17 polypeptides: alpha, beta, gamma, delta, epsilon, 4 (B), 5 (OSCP), 6 (A), 8, 9 (C), d, E (Tim11), f, g, h, i/j and k.

The protein resides in the mitochondrion. The protein localises to the mitochondrion inner membrane. Its function is as follows. Mitochondrial membrane ATP synthase (F(1)F(0) ATP synthase or Complex V) produces ATP from ADP in the presence of a proton gradient across the membrane which is generated by electron transport complexes of the respiratory chain. F-type ATPases consist of two structural domains, F(1) - containing the extramembraneous catalytic core, and F(0) - containing the membrane proton channel, linked together by a central stalk and a peripheral stalk. During catalysis, ATP synthesis in the catalytic domain of F(1) is coupled via a rotary mechanism of the central stalk subunits to proton translocation. Part of the complex F(0) domain and the peripheric stalk, which acts as a stator to hold the catalytic alpha(3)beta(3) subcomplex and subunit a/ATP6 static relative to the rotary elements. The chain is ATP synthase subunit d, mitochondrial (ATP7) from Saccharomyces cerevisiae (strain ATCC 204508 / S288c) (Baker's yeast).